A 486-amino-acid polypeptide reads, in one-letter code: UDP-N-acetylmuramate--L-alanine ligase (486 aa).

ATP is bound at residue 129 to 135 (GTHGKTT).

This sequence belongs to the MurCDEF family.

It localises to the cytoplasm. The enzyme catalyses UDP-N-acetyl-alpha-D-muramate + L-alanine + ATP = UDP-N-acetyl-alpha-D-muramoyl-L-alanine + ADP + phosphate + H(+). Its pathway is cell wall biogenesis; peptidoglycan biosynthesis. Its function is as follows. Cell wall formation. This is UDP-N-acetylmuramate--L-alanine ligase from Vibrio cholerae serotype O1 (strain ATCC 39315 / El Tor Inaba N16961).